The following is a 208-amino-acid chain: 2-dehydro-3-deoxy-phosphogluconate aldolase (208 aa).

Catalysis depends on Glu-41, which acts as the Proton acceptor. Arg-45, Thr-68, and Lys-128 together coordinate pyruvate. Lys-128 serves as the catalytic Schiff-base intermediate with substrate.

The protein belongs to the KHG/KDPG aldolase family. As to quaternary structure, homotrimer.

It is found in the cytoplasm. The enzyme catalyses 2-dehydro-3-deoxy-6-phospho-D-gluconate = D-glyceraldehyde 3-phosphate + pyruvate. It participates in carbohydrate acid metabolism; 2-dehydro-3-deoxy-D-gluconate degradation; D-glyceraldehyde 3-phosphate and pyruvate from 2-dehydro-3-deoxy-D-gluconate: step 2/2. Involved in the degradation of glucose via the Entner-Doudoroff pathway. Catalyzes the reversible, stereospecific retro-aldol cleavage of 2-keto-3-deoxy-6-phosphogluconate (KDPG) to pyruvate and D-glyceraldehyde-3-phosphate. This is 2-dehydro-3-deoxy-phosphogluconate aldolase from Zymomonas mobilis subsp. mobilis (strain ATCC 31821 / ZM4 / CP4).